The following is a 539-amino-acid chain: Hydroxylamine reductase (539 aa).

[4Fe-4S] cluster-binding residues include Cys-3, Cys-6, Cys-14, and Cys-20. Positions 232, 256, 300, 392, 420, 445, 480, and 482 each coordinate hybrid [4Fe-2O-2S] cluster. Cys-392 bears the Cysteine persulfide mark.

Belongs to the HCP family. [4Fe-4S] cluster is required as a cofactor. The cofactor is hybrid [4Fe-2O-2S] cluster.

Its subcellular location is the cytoplasm. It catalyses the reaction A + NH4(+) + H2O = hydroxylamine + AH2 + H(+). Its function is as follows. Catalyzes the reduction of hydroxylamine to form NH(3) and H(2)O. The polypeptide is Hydroxylamine reductase (Chlorobaculum tepidum (strain ATCC 49652 / DSM 12025 / NBRC 103806 / TLS) (Chlorobium tepidum)).